The chain runs to 265 residues: 3-methyl-2-oxobutanoate hydroxymethyltransferase (265 aa).

Positions 45 and 84 each coordinate Mg(2+). 3-methyl-2-oxobutanoate contacts are provided by residues 45 to 46, Asp84, and Lys112; that span reads DS. Mg(2+) is bound at residue Glu114. Residue Glu181 is the Proton acceptor of the active site.

It belongs to the PanB family. Homodecamer; pentamer of dimers. Requires Mg(2+) as cofactor.

Its subcellular location is the cytoplasm. The enzyme catalyses 3-methyl-2-oxobutanoate + (6R)-5,10-methylene-5,6,7,8-tetrahydrofolate + H2O = 2-dehydropantoate + (6S)-5,6,7,8-tetrahydrofolate. It functions in the pathway cofactor biosynthesis; (R)-pantothenate biosynthesis; (R)-pantoate from 3-methyl-2-oxobutanoate: step 1/2. Catalyzes the reversible reaction in which hydroxymethyl group from 5,10-methylenetetrahydrofolate is transferred onto alpha-ketoisovalerate to form ketopantoate. In Yersinia pseudotuberculosis serotype IB (strain PB1/+), this protein is 3-methyl-2-oxobutanoate hydroxymethyltransferase.